Consider the following 170-residue polypeptide: Adenine phosphoribosyltransferase (170 aa).

The protein belongs to the purine/pyrimidine phosphoribosyltransferase family. As to quaternary structure, homodimer.

The protein resides in the cytoplasm. The catalysed reaction is AMP + diphosphate = 5-phospho-alpha-D-ribose 1-diphosphate + adenine. It functions in the pathway purine metabolism; AMP biosynthesis via salvage pathway; AMP from adenine: step 1/1. In terms of biological role, catalyzes a salvage reaction resulting in the formation of AMP, that is energically less costly than de novo synthesis. The sequence is that of Adenine phosphoribosyltransferase from Lactococcus lactis subsp. cremoris (strain MG1363).